Consider the following 139-residue polypeptide: uncharacterized protein (139 aa).

3 consecutive transmembrane segments (helical) span residues 38 to 60 (YFLH…LYVF), 72 to 94 (FIIL…CAGS), and 114 to 136 (ITVV…LIVA).

Its subcellular location is the cell membrane. This is an uncharacterized protein from Treponema pallidum (strain Nichols).